Here is a 366-residue protein sequence, read N- to C-terminus: Cell division protein FtsZ 1 (366 aa).

Residues 45 to 49 (GAGCN), 132 to 134 (GTG), Glu-163, Arg-167, and Asp-210 contribute to the GTP site. A compositionally biased stretch (acidic residues) spans 344-354 (PEEETPLETPE). Residues 344-366 (PEEETPLETPEESPSIEISIPEL) are disordered. Residues 355-366 (ESPSIEISIPEL) are compositionally biased toward low complexity.

This sequence belongs to the FtsZ family. In terms of assembly, homodimer. Polymerizes to form a dynamic ring structure in a strictly GTP-dependent manner. Interacts directly with several other division proteins.

It localises to the cytoplasm. Essential cell division protein that forms a contractile ring structure (Z ring) at the future cell division site. The regulation of the ring assembly controls the timing and the location of cell division. One of the functions of the FtsZ ring is to recruit other cell division proteins to the septum to produce a new cell wall between the dividing cells. Binds GTP and shows GTPase activity. The polypeptide is Cell division protein FtsZ 1 (Pyrococcus woesei).